A 1054-amino-acid polypeptide reads, in one-letter code: Putative disease resistance RPP13-like protein 1 (1054 aa).

Leucine-zipper stretches follow at residues 9 to 20 (LAAFLQALFQTL) and 39 to 53 (LERLSTALLTITAVL). A coiled-coil region spans residues 117-147 (DFLDGNSEHLETRLEKVTIRLERLASQRNIL). The 311-residue stretch at 152-462 (LTAMIPKQRL…AEGFLQQTRS (311 aa)) folds into the NB-ARC domain. ATP is bound at residue 203–210 (GIGGVGKT). LRR repeat units lie at residues 579–600 (RLRVLSLSHYKIARLPPDFFKN), 603–624 (HARFLDLSRTELEKLPKSLCYM), 626–648 (NLQTLLLSYCSSLKELPTDISNL), 650–672 (NLRYLDLIGTKLRQMPRRFGRLK), and 676–697 (TLTTFFVSASDGSRISELGGLH). The interval 1018 to 1054 (PQYHHPQFHLPRSNVSGSPKSHGSHRSYDSRSSSRYD) is disordered. Residues 1043-1054 (RSYDSRSSSRYD) show a composition bias toward basic and acidic residues.

This sequence belongs to the disease resistance NB-LRR family. RPP13 subfamily.

Potential disease resistance protein. The sequence is that of Putative disease resistance RPP13-like protein 1 (RPPL1) from Arabidopsis thaliana (Mouse-ear cress).